Consider the following 109-residue polypeptide: Putative glutaredoxin-C11 (109 aa).

The 107-residue stretch at 2 to 108 folds into the Glutaredoxin domain; it reads AEMVARLASE…PLLKSAGALW (107 aa). Residues cysteine 22 and cysteine 25 are joined by a disulfide bond. Residues 106–109 carry the Responsive for interaction with TGA factors motif; sequence ALWL.

Belongs to the glutaredoxin family. CC-type subfamily.

Its subcellular location is the cytoplasm. The protein localises to the nucleus. Has a glutathione-disulfide oxidoreductase activity in the presence of NADPH and glutathione reductase. Reduces low molecular weight disulfides and proteins. The chain is Putative glutaredoxin-C11 (GRXC11) from Oryza sativa subsp. japonica (Rice).